An 83-amino-acid chain; its full sequence is Exodeoxyribonuclease 7 small subunit (83 aa).

Belongs to the XseB family. As to quaternary structure, heterooligomer composed of large and small subunits.

Its subcellular location is the cytoplasm. The enzyme catalyses Exonucleolytic cleavage in either 5'- to 3'- or 3'- to 5'-direction to yield nucleoside 5'-phosphates.. In terms of biological role, bidirectionally degrades single-stranded DNA into large acid-insoluble oligonucleotides, which are then degraded further into small acid-soluble oligonucleotides. In Rhizobium etli (strain ATCC 51251 / DSM 11541 / JCM 21823 / NBRC 15573 / CFN 42), this protein is Exodeoxyribonuclease 7 small subunit.